Here is a 24-residue protein sequence, read N- to C-terminus: Coenzyme PQQ synthesis protein A (24 aa).

The segment at residues 16–20 (EITMY) is a cross-link (pyrroloquinoline quinone (Glu-Tyr)).

The protein belongs to the PqqA family.

The protein operates within cofactor biosynthesis; pyrroloquinoline quinone biosynthesis. Functionally, required for coenzyme pyrroloquinoline quinone (PQQ) biosynthesis. PQQ is probably formed by cross-linking a specific glutamate to a specific tyrosine residue and excising these residues from the peptide. The polypeptide is Coenzyme PQQ synthesis protein A (Variovorax paradoxus (strain S110)).